Consider the following 71-residue polypeptide: Gas vesicle protein A (71 aa).

The alpha helix 1 stretch occupies residues 12–22 (LAEVIDRILDK). The tract at residues 23–32 (GIVIDAWVRV) is beta-strand 1. The beta turn stretch occupies residues 33–36 (SLVG). Residues 37-46 (IELLAIEARI) form a beta-strand 2 region. Positions 47-70 (VIASVETYLKYAEAVGLTQSAAVP) are alpha helix 2.

It belongs to the gas vesicle GvpA family. In terms of assembly, the gas vesicle shell is 2 nm thick and consists of a single layer of this protein. It forms helical ribs nearly perpendicular to the long axis of the vesicle.

The protein localises to the gas vesicle shell. Its function is as follows. Gas vesicles (GV) are hollow, gas filled proteinaceous nanostructures found in some microorganisms. During planktonic growth they allow positioning of the organism at a favorable depth for light or nutrient acquisition. GVs are highly permeable to gas. GvpA forms the protein shell. The ratio of GvpA:GvpC is estimated to be 33:1 and more recently 25:1. In Dolichospermum flosaquae (Anabaena flos-aquae), this protein is Gas vesicle protein A.